The primary structure comprises 361 residues: Phospho-N-acetylmuramoyl-pentapeptide-transferase (361 aa).

A run of 10 helical transmembrane segments spans residues 25-45, 72-92, 95-115, 133-153, 169-189, 200-220, 240-260, 264-284, 289-309, and 338-358; these read TGGA…WIIN, TPTM…VLWA, VNPY…VGFY, TRLL…VWLG, VVLN…VGAG, GLAI…AYLA, LAVL…FNAP, IFMG…IAVA, IVLA…IVQV, and QIVI…LATL.

It belongs to the glycosyltransferase 4 family. MraY subfamily. It depends on Mg(2+) as a cofactor.

The protein localises to the cell inner membrane. The catalysed reaction is UDP-N-acetyl-alpha-D-muramoyl-L-alanyl-gamma-D-glutamyl-meso-2,6-diaminopimeloyl-D-alanyl-D-alanine + di-trans,octa-cis-undecaprenyl phosphate = di-trans,octa-cis-undecaprenyl diphospho-N-acetyl-alpha-D-muramoyl-L-alanyl-D-glutamyl-meso-2,6-diaminopimeloyl-D-alanyl-D-alanine + UMP. The protein operates within cell wall biogenesis; peptidoglycan biosynthesis. Its function is as follows. Catalyzes the initial step of the lipid cycle reactions in the biosynthesis of the cell wall peptidoglycan: transfers peptidoglycan precursor phospho-MurNAc-pentapeptide from UDP-MurNAc-pentapeptide onto the lipid carrier undecaprenyl phosphate, yielding undecaprenyl-pyrophosphoryl-MurNAc-pentapeptide, known as lipid I. In Rhodopseudomonas palustris (strain BisB5), this protein is Phospho-N-acetylmuramoyl-pentapeptide-transferase.